A 375-amino-acid chain; its full sequence is Stimulator of interferon genes protein 2 (375 aa).

The next 4 helical transmembrane spans lie at 30–50, 60–80, 114–134, and 144–164; these read TATV…LLAV, IHFL…GELV, AGSI…VLYE, and YPIL…LVGL. Positions 195, 256, and 262 each coordinate 2',3'-cGAMP.

Belongs to the STING family.

Its subcellular location is the membrane. Functionally, facilitator of innate immune signaling that acts as a sensor of second messenger signals produced by cyclic GMP-AMP synthase-like receptors (cGLRs) and promotes the production of type I interferon. Innate immune response is triggered in response to nucleotides from viruses and bacteria delivered to the cytoplasm. Acts by binding cyclic dinucleotides: recognizes and binds 2'-3' linked cGAMP (2'-3'-cGAMP), a second messengers produced by cGLRs in response to nucleotides in the cytosol, such as double-stranded RNA (dsRNA). Upon binding to 2'-3'-cGAMP, oligomerizes and promotes the recruitment and subsequent activation of the transcription factor IRF3 to induce expression of type I interferon. In Stylophora pistillata (Smooth cauliflower coral), this protein is Stimulator of interferon genes protein 2.